The chain runs to 228 residues: Urease accessory protein UreF (228 aa).

Belongs to the UreF family. UreD, UreF and UreG form a complex that acts as a GTP-hydrolysis-dependent molecular chaperone, activating the urease apoprotein by helping to assemble the nickel containing metallocenter of UreC. The UreE protein probably delivers the nickel.

The protein resides in the cytoplasm. Required for maturation of urease via the functional incorporation of the urease nickel metallocenter. This Blochmanniella pennsylvanica (strain BPEN) protein is Urease accessory protein UreF.